The sequence spans 163 residues: UPF0416 protein RBE_0909 (163 aa).

It belongs to the UPF0416 family.

The polypeptide is UPF0416 protein RBE_0909 (Rickettsia bellii (strain RML369-C)).